We begin with the raw amino-acid sequence, 299 residues long: Acetylglutamate kinase (299 aa).

Residues 70-71 (GG), R92, and N186 contribute to the substrate site.

This sequence belongs to the acetylglutamate kinase family. ArgB subfamily.

The protein localises to the cytoplasm. The catalysed reaction is N-acetyl-L-glutamate + ATP = N-acetyl-L-glutamyl 5-phosphate + ADP. The protein operates within amino-acid biosynthesis; L-arginine biosynthesis; N(2)-acetyl-L-ornithine from L-glutamate: step 2/4. Functionally, catalyzes the ATP-dependent phosphorylation of N-acetyl-L-glutamate. The chain is Acetylglutamate kinase from Thermoanaerobacter pseudethanolicus (strain ATCC 33223 / 39E) (Clostridium thermohydrosulfuricum).